Reading from the N-terminus, the 447-residue chain is N-succinylarginine dihydrolase (447 aa).

Substrate contacts are provided by residues 19 to 28 (AGLSFGNKAS), asparagine 110, and 137 to 138 (HR). Residue glutamate 174 is part of the active site. A substrate-binding site is contributed by arginine 212. The active site involves histidine 248. Substrate is bound by residues aspartate 250 and asparagine 359. The active-site Nucleophile is cysteine 365.

This sequence belongs to the succinylarginine dihydrolase family. In terms of assembly, homodimer.

It carries out the reaction N(2)-succinyl-L-arginine + 2 H2O + 2 H(+) = N(2)-succinyl-L-ornithine + 2 NH4(+) + CO2. Its pathway is amino-acid degradation; L-arginine degradation via AST pathway; L-glutamate and succinate from L-arginine: step 2/5. In terms of biological role, catalyzes the hydrolysis of N(2)-succinylarginine into N(2)-succinylornithine, ammonia and CO(2). The polypeptide is N-succinylarginine dihydrolase (Escherichia coli O157:H7).